A 505-amino-acid chain; its full sequence is Pleckstrin homology domain-containing family D member 1 (505 aa).

In terms of domain architecture, PH spans 28 to 136; the sequence is KVQLYGVLWK…WLEMLQESGK (109 aa). Residues 146 to 391 adopt a coiled-coil conformation; the sequence is EAMIKSLEAQ…KVRNKEKEER (246 aa). The interval 264 to 284 is disordered; it reads DKNQPQPLTNQSEQPPASDGL. The span at 267–278 shows a compositional bias: polar residues; that stretch reads QPQPLTNQSEQP. Residue arginine 502 is modified to Omega-N-methylarginine.

Belongs to the PLEKHD1 family.

The protein is Pleckstrin homology domain-containing family D member 1 (Plekhd1) of Mus musculus (Mouse).